The primary structure comprises 206 residues: Small ribosomal subunit protein uS4 (206 aa).

The region spanning 96-156 is the S4 RNA-binding domain; it reads RRLDNVVYRM…DKSKNQSRIK (61 aa).

This sequence belongs to the universal ribosomal protein uS4 family. As to quaternary structure, part of the 30S ribosomal subunit. Contacts protein S5. The interaction surface between S4 and S5 is involved in control of translational fidelity.

One of the primary rRNA binding proteins, it binds directly to 16S rRNA where it nucleates assembly of the body of the 30S subunit. Its function is as follows. With S5 and S12 plays an important role in translational accuracy. The polypeptide is Small ribosomal subunit protein uS4 (Buchnera aphidicola subsp. Schizaphis graminum (strain Sg)).